Consider the following 246-residue polypeptide: MTSQLSEDNSESPNLNSDELECKICYNRYNLRQRKPKVLGCCHRVCAKCLYKLVDCGESPQCVIVCPFCRFETRMPEDEVSSLPDDNNILLNLACGGRGKCVGDNPTELLLTPKRLSTIVTPSHTSTNCLVITIMEVQRESSPALNTTPMVEFYRPSNYDPVSIPQNWTVWNCTSLICKTSVRVFVWLLGLLYFSSLPLGIYLLVSKKVTLGVVFVSLVPSSLVILMIYGFCQCMCHEFLDCMSTP.

The RING-type zinc-finger motif lies at 22–70 (CKICYNRYNLRQRKPKVLGCCHRVCAKCLYKLVDCGESPQCVIVCPFCR). The next 2 membrane-spanning stretches (helical) occupy residues 184 to 204 (VFVW…IYLL) and 211 to 231 (LGVV…IYGF).

As to quaternary structure, interacts with ATP6V0C.

It is found in the membrane. Its subcellular location is the cytoplasm. It catalyses the reaction S-ubiquitinyl-[E2 ubiquitin-conjugating enzyme]-L-cysteine + [acceptor protein]-L-lysine = [E2 ubiquitin-conjugating enzyme]-L-cysteine + N(6)-ubiquitinyl-[acceptor protein]-L-lysine.. Its pathway is protein modification; protein ubiquitination. Functionally, E3 ubiquitin-protein ligase that mediates the ubiquitination of atp6v0c and targets it to degradation via the ubiquitin-proteasome pathway. This Xenopus laevis (African clawed frog) protein is E3 ubiquitin-protein ligase RNF182 (rnf182).